The chain runs to 200 residues: MSIKPPSALSELVEALRALPGVGPKSAQRIAYHLMQHDREGAERLGRSLLFATEHLRHCEKCNTFTEAQICEVCSDPERDPALLCVVETPADQIMLEQTMTYRGLYFVLMGRLSPLDGIGPKEIHFDRLVRRASDGIVKEVVLATNFTNEGEATAHYLGQTLKARGLAVTRLARGVPVGGELEYVDAGTIARAMLDRRTL.

Residues 59 to 74 form a C4-type zinc finger; the sequence is CEKCNTFTEAQICEVC. Residues 82 to 177 form the Toprim domain; it reads ALLCVVETPA…AVTRLARGVP (96 aa).

This sequence belongs to the RecR family.

Its function is as follows. May play a role in DNA repair. It seems to be involved in an RecBC-independent recombinational process of DNA repair. It may act with RecF and RecO. The sequence is that of Recombination protein RecR from Burkholderia mallei (strain NCTC 10247).